Reading from the N-terminus, the 398-residue chain is uncharacterized protein (398 aa).

A helical transmembrane segment spans residues Ile-88–Val-108.

The protein to B.megaterium SpoIV.

It localises to the cell membrane. This is an uncharacterized protein from Bacillus subtilis (strain 168).